The chain runs to 237 residues: GATA zinc finger domain-containing protein 18 (237 aa).

2 stretches are compositionally biased toward low complexity: residues 1 to 28 (MAHN…KNNN) and 87 to 118 (NTST…PNSN). Disordered stretches follow at residues 1 to 31 (MAHN…NSEY), 78 to 119 (PTNT…NSNL), and 140 to 186 (FEEG…GGCS). Acidic residues predominate over residues 140-151 (FEEGDDEEETSS). The segment covering 152–167 (DSDSSSSSSTSSSSSE) has biased composition (low complexity). A GATA-type zinc finger spans residues 185-212 (CSICKTQETPYWRKGKDGDKTVYLCNAC).

This is GATA zinc finger domain-containing protein 18 (gtaR) from Dictyostelium discoideum (Social amoeba).